We begin with the raw amino-acid sequence, 287 residues long: MKQKYFSGTSVIIGKPNVGKSTIINKLINSKISIVSKKKHTTQSNITGIMNIGLQHQLIYIDTPGISKKYVYKNQNKTFRNTMALMHSIQFIFLILEKTSWTNEDEYILNIVKKYLKPIFAIINKIDKIKSKEHLLPHILTLSKKHMFQEIIPISGKTGENIHILSKVIQNKLKIVPKPTFPFDLKTNLDIKSIVSEIIREKLILYLGDELPYSIQVSTKNIIDRNIKTSYIEAVISVNNTQHKKIIIGCKGKKIKLCGSLARKALEKFFNKSIYLSLKVIKKNKTL.

In terms of domain architecture, Era-type G spans 6 to 178 (FSGTSVIIGK…IQNKLKIVPK (173 aa)). The segment at 14 to 21 (GKPNVGKS) is G1. 14–21 (GKPNVGKS) serves as a coordination point for GTP. Positions 40–44 (HTTQS) are G2. The G3 stretch occupies residues 62–65 (DTPG). GTP contacts are provided by residues 62–66 (DTPGI) and 124–127 (NKID). The G4 stretch occupies residues 124–127 (NKID). The segment at 154-156 (ISG) is G5. In terms of domain architecture, KH type-2 spans 207–282 (LGDELPYSIQ…SIYLSLKVIK (76 aa)).

Belongs to the TRAFAC class TrmE-Era-EngA-EngB-Septin-like GTPase superfamily. Era GTPase family. In terms of assembly, monomer.

It is found in the cytoplasm. The protein localises to the cell membrane. An essential GTPase that binds both GDP and GTP, with rapid nucleotide exchange. Plays a role in 16S rRNA processing and 30S ribosomal subunit biogenesis and possibly also in cell cycle regulation and energy metabolism. This chain is GTPase Era, found in Buchnera aphidicola subsp. Baizongia pistaciae (strain Bp).